The following is a 455-amino-acid chain: 23S rRNA (uracil(1939)-C(5))-methyltransferase RlmD (455 aa).

One can recognise a TRAM domain in the interval 12-70 (SKQLSAKLSLSVTQLDHLGAGIAQHQGKIVFIPGVLPGETATVQFVEQKKSYAKAKLIS). Positions 83, 89, 92, and 174 each coordinate [4Fe-4S] cluster. Residues Gln288, Phe317, Asn322, Glu338, Asp365, and Asp385 each contribute to the S-adenosyl-L-methionine site. Cys411 serves as the catalytic Nucleophile.

The protein belongs to the class I-like SAM-binding methyltransferase superfamily. RNA M5U methyltransferase family. RlmD subfamily.

The catalysed reaction is uridine(1939) in 23S rRNA + S-adenosyl-L-methionine = 5-methyluridine(1939) in 23S rRNA + S-adenosyl-L-homocysteine + H(+). In terms of biological role, catalyzes the formation of 5-methyl-uridine at position 1939 (m5U1939) in 23S rRNA. This chain is 23S rRNA (uracil(1939)-C(5))-methyltransferase RlmD, found in Shewanella frigidimarina (strain NCIMB 400).